Reading from the N-terminus, the 513-residue chain is Putative GMP synthase [glutamine-hydrolyzing] (513 aa).

Positions 8 to 198 (MIVVLDFGGQ…AFAVCGCEGN (191 aa)) constitute a Glutamine amidotransferase type-1 domain. C85 serves as the catalytic Nucleophile. Residue E174 is part of the active site. The region spanning 199–388 (WSMENFIELE…LGIPDEVVWR (190 aa)) is the GMPS ATP-PPase domain. ATP is bound at residue 226–232 (SGGVDSS).

As to quaternary structure, homodimer.

It carries out the reaction XMP + L-glutamine + ATP + H2O = GMP + L-glutamate + AMP + diphosphate + 2 H(+). It participates in purine metabolism; GMP biosynthesis; GMP from XMP (L-Gln route): step 1/1. In terms of biological role, catalyzes the synthesis of GMP from XMP. The chain is Putative GMP synthase [glutamine-hydrolyzing] (guaA) from Halalkalibacterium halodurans (strain ATCC BAA-125 / DSM 18197 / FERM 7344 / JCM 9153 / C-125) (Bacillus halodurans).